The sequence spans 838 residues: Kinesin-like protein KIFC2 (838 aa).

Residues 23–32 (AAAAEPGDPA) show a composition bias toward low complexity. Disordered stretches follow at residues 23–48 (AAAA…DLPA) and 140–185 (LLQG…GQQP). Residues 156–167 (DGSTSQEESPSH) show a composition bias toward polar residues. The stretch at 186–351 (LQLEEDQRAW…SLRQGCGDLR (166 aa)) forms a coiled coil. Positions 409–740 (NIRVLCRLRP…ARRSPRGRRI (332 aa)) constitute a Kinesin motor domain. 484-491 (GQTGTGKT) is a binding site for ATP. The disordered stretch occupies residues 718-792 (RSPPTRARPP…SPGPPAPLRR (75 aa)).

It belongs to the TRAFAC class myosin-kinesin ATPase superfamily. Kinesin family.

The protein localises to the cytoplasm. It is found in the cytoskeleton. May play a role in microtubule-dependent retrograde axonal transport. May function as the motor for the transport of multivesicular body (MVB)-like organelles in dendrites. The polypeptide is Kinesin-like protein KIFC2 (KIFC2) (Homo sapiens (Human)).